A 174-amino-acid polypeptide reads, in one-letter code: Putative serine protease 46 (174 aa).

One can recognise a Peptidase S1 domain in the interval 43 to 174 (VVKGKLVEVG…IGWGTTGKKG (132 aa)). A disulfide bridge links cysteine 68 with cysteine 84. Residues histidine 83 and aspartate 128 each act as charge relay system in the active site.

Belongs to the peptidase S1 family.

In Homo sapiens (Human), this protein is Putative serine protease 46.